Here is a 237-residue protein sequence, read N- to C-terminus: Ribose-5-phosphate isomerase A (237 aa).

Substrate is bound by residues 30-33 (SGST), 87-90 (DGAD), and 100-103 (KGGG). Glu109 functions as the Proton acceptor in the catalytic mechanism. Lys127 contacts substrate.

It belongs to the ribose 5-phosphate isomerase family. Homodimer.

The enzyme catalyses aldehydo-D-ribose 5-phosphate = D-ribulose 5-phosphate. Its pathway is carbohydrate degradation; pentose phosphate pathway; D-ribose 5-phosphate from D-ribulose 5-phosphate (non-oxidative stage): step 1/1. Its function is as follows. Catalyzes the reversible conversion of ribose-5-phosphate to ribulose 5-phosphate. The protein is Ribose-5-phosphate isomerase A of Prochlorococcus marinus (strain SARG / CCMP1375 / SS120).